An 859-amino-acid chain; its full sequence is DNA mismatch repair protein MutS (859 aa).

ATP is bound at residue 622–629 (GPNMGGKS).

It belongs to the DNA mismatch repair MutS family.

Functionally, this protein is involved in the repair of mismatches in DNA. It is possible that it carries out the mismatch recognition step. This protein has a weak ATPase activity. This chain is DNA mismatch repair protein MutS, found in Coxiella burnetii (strain Dugway 5J108-111).